A 77-amino-acid polypeptide reads, in one-letter code: DNA-directed RNA polymerase subunit epsilon (77 aa).

It belongs to the RNA polymerase subunit epsilon family. As to quaternary structure, RNAP is composed of a core of 2 alpha, a beta and a beta' subunit. The core is associated with a delta subunit, and at least one of epsilon or omega. When a sigma factor is associated with the core the holoenzyme is formed, which can initiate transcription.

The catalysed reaction is RNA(n) + a ribonucleoside 5'-triphosphate = RNA(n+1) + diphosphate. Functionally, a non-essential component of RNA polymerase (RNAP). The chain is DNA-directed RNA polymerase subunit epsilon from Streptococcus pneumoniae (strain Hungary19A-6).